The primary structure comprises 375 residues: tRNA-specific 2-thiouridylase MnmA (375 aa).

Residues 12–19 (GMSGGVDS) and methionine 38 each bind ATP. Residues 98–100 (NPD) are interaction with target base in tRNA. Residue cysteine 103 is the Nucleophile of the active site. A disulfide bridge links cysteine 103 with cysteine 200. Glycine 127 is a binding site for ATP. Positions 150–152 (KDQ) are interaction with tRNA. The active-site Cysteine persulfide intermediate is the cysteine 200. Residues 312–313 (RY) form an interaction with tRNA region.

The protein belongs to the MnmA/TRMU family.

The protein localises to the cytoplasm. It catalyses the reaction S-sulfanyl-L-cysteinyl-[protein] + uridine(34) in tRNA + AH2 + ATP = 2-thiouridine(34) in tRNA + L-cysteinyl-[protein] + A + AMP + diphosphate + H(+). Catalyzes the 2-thiolation of uridine at the wobble position (U34) of tRNA, leading to the formation of s(2)U34. In Lactobacillus gasseri (strain ATCC 33323 / DSM 20243 / BCRC 14619 / CIP 102991 / JCM 1131 / KCTC 3163 / NCIMB 11718 / NCTC 13722 / AM63), this protein is tRNA-specific 2-thiouridylase MnmA.